Here is a 602-residue protein sequence, read N- to C-terminus: PEX5-related protein (602 aa).

Disordered regions lie at residues 94 to 140 (VSQT…PETS) and 167 to 206 (HLMAERKSCSSRAGSKELLWSSEHRSQPELSTGKSALNSE). Residues Ser-181, Ser-229, Ser-233, and Ser-237 each carry the phosphoserine modification. TPR repeat units lie at residues 302–335 (WPGAFEEGLKRLKEGDLPVTILFMEAAILQDPGN), 336–369 (AEAWQFLGITQAENENEQAAIVALQRCLELQPNN), and 371–403 (KALMALAVSYTNTSHQQDACEALKNWIKQNPKY). Phosphoserine is present on residues Ser-421 and Ser-423. TPR repeat units lie at residues 450 to 483 (PDLQTGLGVLFHLSGEFNRAIDAFNAALTVRPED), 485 to 517 (SLWNRLGATLANGDRSEEAVEAYTRALEIQPGF), and 519 to 551 (RSRYNLGISCINLGAYREAVSNFLTALSLQRKS).

The protein belongs to the peroxisomal targeting signal receptor family. Forms an obligate 4:4 complex with HCN2. Interacts with RAB8B. Interacts with HCN3. Interacts with HCN4 with a 4:4 HCN4:PEX5L stoichiometry; reduces the effects of cAMP on the voltage-dependence and rate of activation of HCN4. As to expression, brain specific.

The protein resides in the cytoplasm. It localises to the membrane. In terms of biological role, accessory subunit of hyperpolarization-activated cyclic nucleotide-gated (HCN) channels, regulating their cell-surface expression and cyclic nucleotide dependence. The chain is PEX5-related protein (Pex5l) from Rattus norvegicus (Rat).